The primary structure comprises 549 residues: Neurofilament light polypeptide (549 aa).

Ser-2 carries the post-translational modification N-acetylserine. The segment at 2 to 92 (SSFYSEPYYS…KSIRTQEKAQ (91 aa)) is head. Thr-21 is a glycosylation site (O-linked (GlcNAc) threonine). Position 23 is an asymmetric dimethylarginine; alternate (Arg-23). Omega-N-methylarginine; alternate is present on Arg-23. Residue Ser-27 is glycosylated (O-linked (GlcNAc) serine). Position 30 is an omega-N-methylarginine (Arg-30). The residue at position 43 (Tyr-43) is a Phosphotyrosine. Residues Ser-56, Ser-66, and Ser-102 each carry the phosphoserine modification. The 312-residue stretch at 89–400 (EKAQLQDLND…KLLEGEETRL (312 aa)) folds into the IF rod domain. Residues 93-124 (LQDLNDRFASFIERVHELEQQNKVLEAQLLVL) are coil 1A. The interval 125 to 137 (RQKHSEPSRFRAL) is linker 1. Residues 138–233 (YEQEIRDLRL…KVHEEEIAEL (96 aa)) are coil 1B. The tract at residues 234 to 252 (QAQIQYAQISVEMDVSSKP) is linker 12. A coil 2A region spans residues 253-271 (DLSAALKDIRAQYEKLAAK). Positions 272–280 (NMQNAEEWF) are linker 2. The coil 2B stretch occupies residues 281 to 396 (KSRFTVLTES…AAYRKLLEGE (116 aa)). Residues 381–391 (ALDIEIAAYRK) are epitope; recognized by IF-specific monoclonal antibody. The interval 397 to 443 (ETRLSFTSVGSLTTGYSQSSQVFGRSAYGGLQTSSYLMSTRSFPSYY) is tail, subdomain A. The tract at residues 397–549 (ETRLSFTSVG…GEEQATKKKD (153 aa)) is tail. Residues 444 to 549 (TSHVQEEQIE…GEEQATKKKD (106 aa)) are tail, subdomain B (acidic). The disordered stretch occupies residues 462 to 549 (KAEEAKDEPP…GEEQATKKKD (88 aa)). A compositionally biased stretch (acidic residues) spans 471–534 (PSEGEAEEEG…ETKEAEEEEK (64 aa)). Ser-472 carries the post-translational modification Phosphoserine. Position 526 is a phosphothreonine (Thr-526). The segment covering 535–549 (KDEGAGEEQATKKKD) has biased composition (basic and acidic residues).

Belongs to the intermediate filament family. In terms of assembly, forms homodimers (in vitro). Forms heterodimers with NEFH or NEFM; which can further hetero-oligomerize (in vitro). Forms heterodimers with INA (in vitro). Interacts with ARHGEF28. Interacts with TRIM2. O-glycosylated. In terms of processing, phosphorylated in the head and rod regions by the PKC kinase PKN1, leading to the inhibition of polymerization. Post-translationally, ubiquitinated in the presence of TRIM2 and UBE2D1.

It is found in the cell projection. The protein localises to the axon. It localises to the cytoplasm. The protein resides in the cytoskeleton. Its function is as follows. Neurofilaments usually contain three intermediate filament proteins: NEFL, NEFM, and NEFH which are involved in the maintenance of neuronal caliber. May additionally cooperate with the neuronal intermediate filament proteins PRPH and INA to form neuronal filamentous networks. This is Neurofilament light polypeptide (NEFL) from Sus scrofa (Pig).